A 548-amino-acid polypeptide reads, in one-letter code: ATP synthase subunit alpha (548 aa).

An ATP-binding site is contributed by 172–179; sequence GDRKTGKT. A disordered region spans residues 511–548; it reads FETTSGESVVPDENVEAMSEDDVEKESVKVRKPAPKKK. Residues 523–534 show a composition bias toward acidic residues; it reads ENVEAMSEDDVE.

The protein belongs to the ATPase alpha/beta chains family. F-type ATPases have 2 components, CF(1) - the catalytic core - and CF(0) - the membrane proton channel. CF(1) has five subunits: alpha(3), beta(3), gamma(1), delta(1), epsilon(1). CF(0) has three main subunits: a(1), b(2) and c(9-12). The alpha and beta chains form an alternating ring which encloses part of the gamma chain. CF(1) is attached to CF(0) by a central stalk formed by the gamma and epsilon chains, while a peripheral stalk is formed by the delta and b chains.

It is found in the cell membrane. The catalysed reaction is ATP + H2O + 4 H(+)(in) = ADP + phosphate + 5 H(+)(out). Produces ATP from ADP in the presence of a proton gradient across the membrane. The alpha chain is a regulatory subunit. The polypeptide is ATP synthase subunit alpha (Mycobacterium sp. (strain JLS)).